A 107-amino-acid chain; its full sequence is Nucleoid-associated protein XF_1808 (107 aa).

Belongs to the YbaB/EbfC family. Homodimer.

Its subcellular location is the cytoplasm. It localises to the nucleoid. Its function is as follows. Binds to DNA and alters its conformation. May be involved in regulation of gene expression, nucleoid organization and DNA protection. This chain is Nucleoid-associated protein XF_1808, found in Xylella fastidiosa (strain 9a5c).